The primary structure comprises 406 residues: Flavohemoprotein (406 aa).

The region spanning 6-144 is the Globin domain; sequence VLLDKKTTEI…IADIFISVEK (139 aa). His91 is a binding site for heme b. Catalysis depends on charge relay system residues Tyr101 and Glu143. The reductase stretch occupies residues 155 to 406; that stretch reads GGWTGFRDFK…LFGPLEPIAK (252 aa). Residues 158 to 267 form the FAD-binding FR-type domain; that stretch reads TGFRDFKVIK…SAPAGDFILD (110 aa). Residues Tyr196 and 212–215 each bind FAD; that span reads RQYS. 280–285 contributes to the NADP(+) binding site; it reads GVGLTP. 397–400 contributes to the FAD binding site; it reads LFGP.

The protein belongs to the globin family. Two-domain flavohemoproteins subfamily. It in the C-terminal section; belongs to the flavoprotein pyridine nucleotide cytochrome reductase family. Heme b is required as a cofactor. The cofactor is FAD.

It catalyses the reaction 2 nitric oxide + NADPH + 2 O2 = 2 nitrate + NADP(+) + H(+). The catalysed reaction is 2 nitric oxide + NADH + 2 O2 = 2 nitrate + NAD(+) + H(+). Functionally, is involved in NO detoxification in an aerobic process, termed nitric oxide dioxygenase (NOD) reaction that utilizes O(2) and NAD(P)H to convert NO to nitrate, which protects the bacterium from various noxious nitrogen compounds. Therefore, plays a central role in the inducible response to nitrosative stress. The chain is Flavohemoprotein from Oceanobacillus iheyensis (strain DSM 14371 / CIP 107618 / JCM 11309 / KCTC 3954 / HTE831).